We begin with the raw amino-acid sequence, 273 residues long: HMP-PP phosphatase (273 aa).

Aspartate 8 serves as the catalytic Nucleophile. Mg(2+) contacts are provided by aspartate 8, aspartate 10, and aspartate 212.

Belongs to the HAD-like hydrolase superfamily. Cof family. The cofactor is Mg(2+).

It catalyses the reaction 4-amino-2-methyl-5-(diphosphooxymethyl)pyrimidine + H2O = 4-amino-2-methyl-5-(phosphooxymethyl)pyrimidine + phosphate + H(+). Functionally, catalyzes the hydrolysis of 4-amino-2-methyl-5-hydroxymethylpyrimidine pyrophosphate (HMP-PP) to 4-amino-2-methyl-5-hydroxymethylpyrimidine phosphate (HMP-P). The protein is HMP-PP phosphatase of Yersinia pseudotuberculosis serotype IB (strain PB1/+).